The primary structure comprises 974 residues: Toxin subunit YenC1 (974 aa).

RHS repeat units follow at residues 165–179 (AGQC…GLNQ), 290–304 (GVLT…TQRL), 322–336 (FQDL…GNVL), 354–368 (VPEN…YQLV), 398–412 (NYIR…GNLM), 490–504 (SDSE…SQRV), 570–584 (NDEL…IGSS), 596–610 (SQEE…AVWM), and 630–644 (DATG…YYQP). Residues 600 to 680 (YYPYGGTAVW…PIVLHDPDGL (81 aa)) are RHS-repeat associated core domain. A cytotoxic necrotising factor domain region spans residues 699 to 940 (ISSLKGTGPF…GEVSASTLLE (242 aa)).

Belongs to the RHS family. In terms of assembly, semipurified toxin complex consists of at least YenA1-YenA2-YenB-YenC1-YenC2-Chi1-Chi2. The Yen-TC:K9 subcomplex is about 26 nm tall and 22 nm in diameter with 5-fold symmetry and 5 copies of YenA1, YenA2, Chi1 and Chi2; the chitinase subunits may be solvent accessible on the exterior the complex. The Yen-TC:K9 subcomplex has no insecticidal activity. The native complex with additional YenB, YenC1 and YenC2 subunits is 16 nm taller and is insecticidal; the toxicity-conferring subunits are present at about 1 copy each.

It localises to the secreted. Toxin complex is secreted when grown at 25 degrees Celsius or less; at higher temperatures the proteins are present intracellularly but not secreted. Functionally, part of an orally active toxin complex (TC) with strong insecticidal effects on larvae of the Coleoptera Costelytra zealandica, Acrossidius tasmania and Adoryphorus couloni and some Lepidoptera larvae. The TC has an endochitinase activity. The polypeptide is Toxin subunit YenC1 (Yersinia entomophaga).